A 105-amino-acid chain; its full sequence is Heat shock protein HspQ (105 aa).

The protein belongs to the HspQ family.

The protein localises to the cytoplasm. Its function is as follows. Involved in the degradation of certain denaturated proteins, including DnaA, during heat shock stress. This is Heat shock protein HspQ from Baumannia cicadellinicola subsp. Homalodisca coagulata.